We begin with the raw amino-acid sequence, 236 residues long: Sugar fermentation stimulation protein homolog (236 aa).

Belongs to the SfsA family.

In Proteus mirabilis (strain HI4320), this protein is Sugar fermentation stimulation protein homolog.